An 85-amino-acid polypeptide reads, in one-letter code: Cell division topological specificity factor (85 aa).

Belongs to the MinE family.

Functionally, prevents the cell division inhibition by proteins MinC and MinD at internal division sites while permitting inhibition at polar sites. This ensures cell division at the proper site by restricting the formation of a division septum at the midpoint of the long axis of the cell. This chain is Cell division topological specificity factor, found in Chromobacterium violaceum (strain ATCC 12472 / DSM 30191 / JCM 1249 / CCUG 213 / NBRC 12614 / NCIMB 9131 / NCTC 9757 / MK).